The primary structure comprises 262 residues: Small ribosomal subunit protein eS1 (262 aa).

The segment covering 234-251 (DPKEDSGKNVKSLPESKE) has biased composition (basic and acidic residues). Residues 234-262 (DPKEDSGKNVKSLPESKEATNILTAELKH) are disordered.

This sequence belongs to the eukaryotic ribosomal protein eS1 family. As to quaternary structure, component of the small ribosomal subunit. Mature ribosomes consist of a small (40S) and a large (60S) subunit. The 40S subunit contains about 33 different proteins and 1 molecule of RNA (18S). The 60S subunit contains about 49 different proteins and 3 molecules of RNA (25S, 5.8S and 5S).

It is found in the cytoplasm. In Plasmodium yoelii yoelii, this protein is Small ribosomal subunit protein eS1.